The following is a 382-amino-acid chain: Sphingoid long-chain base transporter RSB1 (382 aa).

At 1–34 (MSNATNNTLGSLLPQLEAAANSNSLYGGMVPNLR) the chain is on the extracellular side. N-linked (GlcNAc...) asparagine glycosylation is found at asparagine 3 and asparagine 6. Residues 35–55 (FNITMIVIWGILLTIHVVQLL) form a helical membrane-spanning segment. The Cytoplasmic segment spans residues 56–57 (MR). A helical transmembrane segment spans residues 58 to 78 (QYWFSIAFICTGILEVLGFIG). Residues 79-90 (RTWSHSNVADMD) lie on the Extracellular side of the membrane. A helical membrane pass occupies residues 91 to 111 (AFLLNMICLTIAPVFTMGGIY). At 112–135 (YQLAKLIEVYGHRFSLLPSPMAYS) the chain is on the cytoplasmic side. Residues 136–156 (FIFICSDIVSLVVQAVGGGLC) traverse the membrane as a helical segment. Residues 157 to 171 (GVAVTDGTSTTTGNH) are Extracellular-facing. A helical membrane pass occupies residues 172–192 (VFIAGLAIQVASMAIFLMLWF). Topologically, residues 193-241 (HFLFRIYISVRWEHINSRPISLSLLKISQTEVDYLYREKFHFLRLEPKR) are cytoplasmic. The chain crosses the membrane as a helical span at residues 242-262 (WVFHYFNLAMTVAVLTIFTRC). Topologically, residues 263–281 (CYRLAELVVGWDGYLITHE) are extracellular. A helical membrane pass occupies residues 282–302 (WYFIILDALMMAIATVTLTIF). Residues 303–382 (HPGFAFKGRS…LFSSKKKAKL (80 aa)) lie on the Cytoplasmic side of the membrane.

The protein belongs to the lipid-translocating exporter (LTE) (TC 9.A.26.1) family.

The protein localises to the cell membrane. In terms of biological role, catalyzes the ATP-dependent translocation of sphingoid long-chain bases (LCBs) from the cytoplasmic site toward the extracytoplasmic side of the membrane (flip-flop). Involved in the establishment of the functional lipid asymmetry of the plasma membrane. Regulates intracellular levels of LCBs, sphingolipid precursors that are growth inhibitory at increased levels. The sequence is that of Sphingoid long-chain base transporter RSB1 (RSB1) from Saccharomyces cerevisiae (strain RM11-1a) (Baker's yeast).